The chain runs to 97 residues: YcgL domain-containing protein PputGB1_4120 (97 aa).

The YcgL domain maps to 3 to 87 (RICSIYKSPR…AEDEYIEHLP (85 aa)).

This Pseudomonas putida (strain GB-1) protein is YcgL domain-containing protein PputGB1_4120.